The sequence spans 312 residues: Ribosomal RNA small subunit methyltransferase H (312 aa).

Residues 38–40 (GGH), Asp58, Phe84, Asp104, and Gln111 each bind S-adenosyl-L-methionine.

This sequence belongs to the methyltransferase superfamily. RsmH family.

The protein localises to the cytoplasm. It catalyses the reaction cytidine(1402) in 16S rRNA + S-adenosyl-L-methionine = N(4)-methylcytidine(1402) in 16S rRNA + S-adenosyl-L-homocysteine + H(+). Functionally, specifically methylates the N4 position of cytidine in position 1402 (C1402) of 16S rRNA. The polypeptide is Ribosomal RNA small subunit methyltransferase H (Alcanivorax borkumensis (strain ATCC 700651 / DSM 11573 / NCIMB 13689 / SK2)).